The following is a 392-amino-acid chain: MSFLTLKDVDLKDKKVLVRVDFNVPVKDGKVTSKVRIEAAIPTIQYILDQGGAVILMSHLGRPTEGEYDSQFSLEPVAKALSEIINKPVKFAKDWLDGVDVKAGEIVMCENVRFNSGEKKSTDDLSKKIASLGDVFVMDAFATAHRAQASTYGVAKYIPVACAGILLTNEIQALEKALKSPKKPMAAIVGGSKVSTKLSVLNNLLDKVEILIVGGGIANTFIKAEGFDVGNSLYEQDLVAEATEILAKAKALGVNIPVPVDVRVAKEFSENAQAIIKKVSDVAADEMILDIGPESEKRIAELLKSANTILWNGPVGVFEFDNFAEGTKALSLSIAQSHAFSVAGGGDTIAAIEKFGIKDQVSYISTAGGAFLEFLEGKKLPAIEILKEKAIR.

Residues 21–23 (DFN), Arg36, 59–62 (HLGR), Arg113, and Arg146 each bind substrate. ATP contacts are provided by residues Lys197, Glu319, and 345–348 (GGDT).

Belongs to the phosphoglycerate kinase family. Monomer.

The protein resides in the cytoplasm. It catalyses the reaction (2R)-3-phosphoglycerate + ATP = (2R)-3-phospho-glyceroyl phosphate + ADP. The protein operates within carbohydrate degradation; glycolysis; pyruvate from D-glyceraldehyde 3-phosphate: step 2/5. The polypeptide is Phosphoglycerate kinase (Francisella tularensis subsp. novicida (strain U112)).